A 570-amino-acid polypeptide reads, in one-letter code: Proline--tRNA ligase (570 aa).

This sequence belongs to the class-II aminoacyl-tRNA synthetase family. ProS type 1 subfamily. In terms of assembly, homodimer.

It localises to the cytoplasm. It carries out the reaction tRNA(Pro) + L-proline + ATP = L-prolyl-tRNA(Pro) + AMP + diphosphate. Its function is as follows. Catalyzes the attachment of proline to tRNA(Pro) in a two-step reaction: proline is first activated by ATP to form Pro-AMP and then transferred to the acceptor end of tRNA(Pro). As ProRS can inadvertently accommodate and process non-cognate amino acids such as alanine and cysteine, to avoid such errors it has two additional distinct editing activities against alanine. One activity is designated as 'pretransfer' editing and involves the tRNA(Pro)-independent hydrolysis of activated Ala-AMP. The other activity is designated 'posttransfer' editing and involves deacylation of mischarged Ala-tRNA(Pro). The misacylated Cys-tRNA(Pro) is not edited by ProRS. This chain is Proline--tRNA ligase, found in Thermoanaerobacter pseudethanolicus (strain ATCC 33223 / 39E) (Clostridium thermohydrosulfuricum).